Here is an 874-residue protein sequence, read N- to C-terminus: Alanine--tRNA ligase (874 aa).

His564, His568, Cys665, and His669 together coordinate Zn(2+).

This sequence belongs to the class-II aminoacyl-tRNA synthetase family. Zn(2+) serves as cofactor.

It localises to the cytoplasm. The enzyme catalyses tRNA(Ala) + L-alanine + ATP = L-alanyl-tRNA(Ala) + AMP + diphosphate. In terms of biological role, catalyzes the attachment of alanine to tRNA(Ala) in a two-step reaction: alanine is first activated by ATP to form Ala-AMP and then transferred to the acceptor end of tRNA(Ala). Also edits incorrectly charged Ser-tRNA(Ala) and Gly-tRNA(Ala) via its editing domain. The sequence is that of Alanine--tRNA ligase from Burkholderia vietnamiensis (strain G4 / LMG 22486) (Burkholderia cepacia (strain R1808)).